A 199-amino-acid polypeptide reads, in one-letter code: MAAVTTDLIRELRERTSAGMMDCKKALEENNADIEKAITWLREKGIAKAAKKAGRETKEGRVVSYIHGNGKIGVLVELNSETDFVSKNEDFEALGKEICMQIAAMNPLYLNEESIPAADLEKEKTIMRSQLEAEGKKADQIEKILPGKIKKYISEVCLVNQAFFKDDSKTIDDLVKEAIAKFGENITIARFIRFQVGGL.

The segment at 82–85 (TDFV) is involved in Mg(2+) ion dislocation from EF-Tu.

Belongs to the EF-Ts family.

It localises to the cytoplasm. In terms of biological role, associates with the EF-Tu.GDP complex and induces the exchange of GDP to GTP. It remains bound to the aminoacyl-tRNA.EF-Tu.GTP complex up to the GTP hydrolysis stage on the ribosome. The sequence is that of Elongation factor Ts from Leptospira interrogans serogroup Icterohaemorrhagiae serovar copenhageni (strain Fiocruz L1-130).